Consider the following 100-residue polypeptide: Large ribosomal subunit protein uL23 (100 aa).

This sequence belongs to the universal ribosomal protein uL23 family. Part of the 50S ribosomal subunit. Contacts protein L29, and trigger factor when it is bound to the ribosome.

Functionally, one of the early assembly proteins it binds 23S rRNA. One of the proteins that surrounds the polypeptide exit tunnel on the outside of the ribosome. Forms the main docking site for trigger factor binding to the ribosome. This chain is Large ribosomal subunit protein uL23, found in Lactobacillus acidophilus (strain ATCC 700396 / NCK56 / N2 / NCFM).